The chain runs to 955 residues: Kinesin heavy chain isoform 5C (955 aa).

The Kinesin motor domain occupies 8-327 (SIKVMCRFRP…LMFGQRAKTI (320 aa)). Residues Q87, S89, S90, G91, K92, T93, H94, and K99 each contribute to the ATP site. A microtubule-binding region spans residues 174-315 (VSSPEEVMDV…PSVFNEAETK (142 aa)). A coiled-coil region spans residues 332–366 (SVNLELTAEEWKKKYEKEKEKNKALKSVIQHLEVE). Position 403 is a phosphothreonine (T403). Coiled coils occupy residues 413–538 (KEKY…LQEL) and 590–913 (ISKM…KNMA). Residues 859-955 (CELPKLEKRL…GSSNSTHYQK (97 aa)) form a globular region. The segment at 909–955 (AKNMARRAHSAQIAKPIRPGHYPASSPTAVHAVRGGGGSSNSTHYQK) is disordered.

The protein belongs to the TRAFAC class myosin-kinesin ATPase superfamily. Kinesin family. Kinesin subfamily. As to quaternary structure, oligomer composed of two heavy chains and two light chains. Interacts with GRIP1. Interacts with TRAK1. Interacts with ZFYVE27. Interacts with KLC3.

The protein localises to the cytoplasm. It is found in the cytoskeleton. It localises to the cell projection. The protein resides in the dendrite. It carries out the reaction ATP + H2O = ADP + phosphate + H(+). In terms of biological role, microtubule-associated force-producing protein that may play a role in organelle transport. Has ATPase activity. Involved in synaptic transmission. Mediates dendritic trafficking of mRNAs. Required for anterograde axonal transportation of MAPK8IP3/JIP3 which is essential for MAPK8IP3/JIP3 function in axon elongation. In Rattus norvegicus (Rat), this protein is Kinesin heavy chain isoform 5C (Kif5c).